A 450-amino-acid chain; its full sequence is UDP-N-acetylmuramoylalanine--D-glutamate ligase (450 aa).

118 to 124 (GSNAKST) serves as a coordination point for ATP.

This sequence belongs to the MurCDEF family.

Its subcellular location is the cytoplasm. The catalysed reaction is UDP-N-acetyl-alpha-D-muramoyl-L-alanine + D-glutamate + ATP = UDP-N-acetyl-alpha-D-muramoyl-L-alanyl-D-glutamate + ADP + phosphate + H(+). It participates in cell wall biogenesis; peptidoglycan biosynthesis. Cell wall formation. Catalyzes the addition of glutamate to the nucleotide precursor UDP-N-acetylmuramoyl-L-alanine (UMA). This chain is UDP-N-acetylmuramoylalanine--D-glutamate ligase, found in Pseudomonas putida (strain ATCC 47054 / DSM 6125 / CFBP 8728 / NCIMB 11950 / KT2440).